Consider the following 287-residue polypeptide: MLARFPLYLRLIRMDKPIGSLLLLWPTLNALWIASDGHPAPSLVVIFALGTLLMRSAGCAINDYADRDFDRHVKRTAERPLTSGKIRAWEAIAIAVGLALVSFLLILPLNGLTKELSVVAVFVAATYPFMKRFFAIPQAYLGIAFGFGIPMAFAAVQDTVPMIAWAMLAANVFWSVAYDTAYAMVDRDDDLKIGMRTSAITFGRHDVLAIMLCYAAMLGIYVWLGAALHFGWPYWAGWAAAAGCSIYHYTLIKDRERMACFAAFRHNNWLGGVLFAGIAAHYALAVR.

The next 7 membrane-spanning stretches (helical) occupy residues 30–50 (ALWI…FALG), 92–112 (IAIA…LNGL), 133–153 (FFAI…PMAF), 158–178 (DTVP…SVAY), 207–227 (VLAI…LGAA), 232–252 (WPYW…YTLI), and 266–286 (HNNW…ALAV).

The protein belongs to the UbiA prenyltransferase family. Requires Mg(2+) as cofactor.

It localises to the cell inner membrane. It carries out the reaction all-trans-octaprenyl diphosphate + 4-hydroxybenzoate = 4-hydroxy-3-(all-trans-octaprenyl)benzoate + diphosphate. Its pathway is cofactor biosynthesis; ubiquinone biosynthesis. Its function is as follows. Catalyzes the prenylation of para-hydroxybenzoate (PHB) with an all-trans polyprenyl group. Mediates the second step in the final reaction sequence of ubiquinone-8 (UQ-8) biosynthesis, which is the condensation of the polyisoprenoid side chain with PHB, generating the first membrane-bound Q intermediate 3-octaprenyl-4-hydroxybenzoate. The polypeptide is 4-hydroxybenzoate octaprenyltransferase (Burkholderia mallei (strain NCTC 10247)).